The following is a 15281-amino-acid chain: Cyclosporin synthetase simA (15281 aa).

The condensation 1 stretch occupies residues 34-463; the sequence is SFAQGRLWFL…AVHVKTMPLT (430 aa). Residues 513–918 are adenylation 1; sequence SYSELDHKSD…NSDQVRDAAV (406 aa). A Carrier 1 domain is found at 1026–1100; sequence APRNEIEAVL…DLAATIQRGS (75 aa). An O-(pantetheine 4'-phosphoryl)serine modification is found at serine 1060. Positions 1118-1549 are condensation 2; that stretch reads SFAQGRLWFL…QTPIMTMPLT (432 aa). Residues 1599-2004 form an adenylation 2 region; the sequence is SYAELDQRSD…SSAGVHDAVV (406 aa). The methyltransferase (M) domain 1 stretch occupies residues 2067 to 2251; that stretch reads SWTSMYDGTL…LEELEEELLV (185 aa). Positions 2524–2598 constitute a Carrier 2 domain; that stretch reads APRDSIEAII…DLAATIQQDT (75 aa). Serine 2558 is subject to O-(pantetheine 4'-phosphoryl)serine. The tract at residues 2616 to 3044 is condensation 3; sequence SFAQGRLWFL…EPDMPVASMA (429 aa). The segment at 3096 to 3498 is adenylation 3; it reads SYADLDRKSD…SHDLVTDAAV (403 aa). The methyltransferase (M) domain 2 stretch occupies residues 3562-3749; that stretch reads SMYDGSLIKK…EDELLVDPAF (188 aa). Residues 4011–4085 enclose the Carrier 3 domain; the sequence is APRTEIERVL…DLVLIVQQGS (75 aa). Serine 4045 carries the O-(pantetheine 4'-phosphoryl)serine modification. A condensation 4 region spans residues 4100–4530; sequence VPQSFAQGRL…GPDVPISTLP (431 aa). The adenylation 4 stretch occupies residues 4582–4986; the sequence is SYAQLDRESD…FLNDGFVEDV (405 aa). The methyltransferase (M) domain 3 stretch occupies residues 5052–5241; that stretch reads TSMYDGTEID…ELLVDPAFFT (190 aa). One can recognise a Carrier 4 domain in the interval 5503–5577; the sequence is PPRNSVEATV…DLAAVIQRNS (75 aa). At serine 5537 the chain carries O-(pantetheine 4'-phosphoryl)serine. The condensation 5 stretch occupies residues 5592-6023; that stretch reads VPQSFAQGRL…QPLTPLAVLP (432 aa). Positions 6075 to 6478 are adenylation 5; that stretch reads TYAQLDQQSD…SHNSVQDAAV (404 aa). Residues 6545–6729 form a methyltransferase (M) domain 4 region; the sequence is WTSMYDGSEI…ELEANEEELL (185 aa). Residues 7000–7074 enclose the Carrier 5 domain; it reads APRNEIEAIL…DLAASIQRES (75 aa). O-(pantetheine 4'-phosphoryl)serine is present on serine 7034. Residues 7092 to 7517 are condensation 6; that stretch reads SFAQGRLWFL…VLDQPLTPIS (426 aa). Residues 7572–7976 form an adenylation 6 region; it reads TYAQLDEQSD…DHKSVLAATV (405 aa). The Carrier 6 domain occupies 8060 to 8134; that stretch reads PPRDEVEAVL…DLADIIRRGS (75 aa). An O-(pantetheine 4'-phosphoryl)serine modification is found at serine 8094. Residues 8152-8582 form a condensation 7 region; sequence SFAQGRLWFL…PKQRLMAMPI (431 aa). Residues 8633 to 9038 form an adenylation 7 region; that stretch reads TYADLDGQSN…GHDLVHDAAV (406 aa). The segment at 9111–9288 is methyltransferase (M) domain 5; it reads PVNEMKEWLD…EESEEELLVD (178 aa). In terms of domain architecture, Carrier 7 spans 9555–9629; sequence APRNDTEIVL…DLAASIEQGS (75 aa). Serine 9589 is modified (O-(pantetheine 4'-phosphoryl)serine). A condensation 8 region spans residues 9647–10077; that stretch reads SYAQGRLWFL…QVSISTMPLT (431 aa). The interval 10127-10529 is adenylation 8; that stretch reads SYTSLDQKSE…GNKAIHDAAV (403 aa). The tract at residues 10588–10768 is methyltransferase (M) domain 6; that stretch reads RDFTSWTSMY…DQIRQEVARL (181 aa). Residues 11052 to 11126 form the Carrier 8 domain; the sequence is APRNDIEAVL…DLADVVQTGS (75 aa). Serine 11086 is subject to O-(pantetheine 4'-phosphoryl)serine. Positions 11144-11567 are condensation 9; the sequence is SFSQGRLWFL…HANLATLPLT (424 aa). Residues 11616–12019 are adenylation 9; sequence TYTELDERSS…RDPAISDSAV (404 aa). The Carrier 9 domain occupies 12124–12198; sequence APRNDIETII…QLAASIQQGS (75 aa). Serine 12158 carries the O-(pantetheine 4'-phosphoryl)serine modification. Residues 12216-12645 are condensation 10; the sequence is SFAQGRLWFL…IAISTMPLVD (430 aa). The segment at 12696-13096 is adenylation 10; that stretch reads TYAELDQQSD…SDSSINDAVV (401 aa). The methyltransferase (M) domain 7 stretch occupies residues 13162–13343; the sequence is YDGSLIPREE…EDDEEELLVD (182 aa). Positions 13620-13694 constitute a Carrier 10 domain; sequence APRTEIEVVL…DLAASILQGS (75 aa). Serine 13654 carries the O-(pantetheine 4'-phosphoryl)serine modification. A condensation 11 region spans residues 13710-14143; sequence EQSFAQGRLW…PQSPIATMPL (434 aa). An adenylation 11 region spans residues 14194–14598; the sequence is TYAELDRLSD…SENSVTDAAV (405 aa). The Carrier 11 domain occupies 14695-14769; the sequence is APRNETEAAI…SLAGKLEQQQ (75 aa). Serine 14729 carries the post-translational modification O-(pantetheine 4'-phosphoryl)serine. Positions 14814–15158 are condensation 12; it reads DMYPATQTQI…HPEAEIEGQQ (345 aa). The segment at 15169–15224 is disordered; sequence QARQANGHAPNGTNGTNGTNGTNGANGTNGTNGTNGTHANGINGSNGVNGRDSNVV. Residues 15173–15211 show a composition bias toward low complexity; the sequence is ANGHAPNGTNGTNGTNGTNGANGTNGTNGTNGTHANGIN. Residues 15213–15224 show a composition bias toward polar residues; sequence SNGVNGRDSNVV.

It belongs to the NRP synthetase family. The cofactor is pantetheine 4'-phosphate.

Functionally, nonribosomal peptide synthetase; part of the gene cluster that mediates the biosynthesis of the cycloundecapeptide cyclosporin A (CsA), a compound with antifungal activity used as an immunosuppressant drug. Cyclosporin A contains three non-proteinogenic amino acids: D-alanine, alpha-amino butyric acid and the unusual amino acid (4R)-4-[(E)-2-butenyl]-4-methyl-l-threonine (Bmt). The nonribosomal peptide synthetase (NRPS) catalyzes the elongation and cyclization of the undecapeptide chain. SimA contains 11 modules responsible for sequential uptake of substrates and chain elongation. In addition to the core condensation-adenylation-thiolation (C-A-T) domains present in each module, seven modules contain an additional N-methylation (M) domain (modules 2, 3, 4, 5, 7, 8, and 10). The terminal C domain (C12 or Ct) is implicated in cyclization of the peptidyl chains to form CsA. The first module (A1) takes up D-Ala which is provided by the alanine racemase simB. The A2, A3, A8, and A10 domains have the same substrate-specific signature for recognition of leucine residues. The unusual amino acid (4R)-4-[(E)-2-butenyl]-4-methyl-l-threonine (Bmt) is recognized by the fifth module (A5). The A11 domain recognizes L-Ala. The PKS simG mediates the biosynthesis of 3R-hydroxyl-4R-methyl-6E-octenoic acid from acetyl coenzyme A (acetyl-CoA), malonyl-CoA, and S-adenosylmethionine, and 3R-hydroxyl-4R-methyl-6E-octenoic acid is then be repeatedly oxidized by simI to 3R-hydroxy-4R-methyl-2-keto-6E-octenoic acid. The latter is likely converted to Bmt through the action of the aminotransferase SimJ. This Tolypocladium inflatum (Cyclosporin fungus) protein is Cyclosporin synthetase simA.